Consider the following 365-residue polypeptide: Aspartate-semialdehyde dehydrogenase (365 aa).

NADP(+) contacts are provided by Thr13, Gly14, Ser15, Val16, Ser38, Ser41, Leu85, and Asp86. Thr13 bears the Phosphothreonine mark. Cys156 functions as the Acyl-thioester intermediate in the catalytic mechanism. An NADP(+)-binding site is contributed by Gly188. Catalysis depends on His256, which acts as the Proton acceptor. Ser318 and Ser323 each carry phosphoserine. Asn343 serves as a coordination point for NADP(+).

Belongs to the aspartate-semialdehyde dehydrogenase family. Homotetramer.

The protein localises to the cytoplasm. The protein resides in the cytosol. It localises to the nucleus. The catalysed reaction is L-aspartate 4-semialdehyde + phosphate + NADP(+) = 4-phospho-L-aspartate + NADPH + H(+). It functions in the pathway amino-acid biosynthesis; L-methionine biosynthesis via de novo pathway; L-homoserine from L-aspartate: step 2/3. Its pathway is amino-acid biosynthesis; L-threonine biosynthesis; L-threonine from L-aspartate: step 2/5. Functionally, catalyzes the NADPH-dependent formation of L-aspartate 4-semialdehyde (L-ASA) by the reductive dephosphorylation of 4-phospho-L-aspartate. Mediates the second step in the biosynthesis of amino acids that derive from aspartate (the aspartate family of amino acids), including methioinine and threonine, the latter of which is a precursor to isoleucine. This Saccharomyces cerevisiae (strain ATCC 204508 / S288c) (Baker's yeast) protein is Aspartate-semialdehyde dehydrogenase (HOM2).